Reading from the N-terminus, the 192-residue chain is Peptidyl-tRNA hydrolase (192 aa).

Tyrosine 17 serves as a coordination point for tRNA. Histidine 22 serves as the catalytic Proton acceptor. Tyrosine 68, asparagine 70, and asparagine 116 together coordinate tRNA.

This sequence belongs to the PTH family. As to quaternary structure, monomer.

It localises to the cytoplasm. The enzyme catalyses an N-acyl-L-alpha-aminoacyl-tRNA + H2O = an N-acyl-L-amino acid + a tRNA + H(+). Functionally, hydrolyzes ribosome-free peptidyl-tRNAs (with 1 or more amino acids incorporated), which drop off the ribosome during protein synthesis, or as a result of ribosome stalling. In terms of biological role, catalyzes the release of premature peptidyl moieties from peptidyl-tRNA molecules trapped in stalled 50S ribosomal subunits, and thus maintains levels of free tRNAs and 50S ribosomes. In Mycolicibacterium gilvum (strain PYR-GCK) (Mycobacterium gilvum (strain PYR-GCK)), this protein is Peptidyl-tRNA hydrolase.